Reading from the N-terminus, the 513-residue chain is Tigger transposable element-derived protein 4 (513 aa).

One can recognise an HTH psq-type domain in the interval P12–V63. DNA-binding regions (H-T-H motif) lie at residues K39 to N59 and P108 to R139. An HTH CENPB-type domain is found at K75–A146. The region spanning Y174–Y375 is the DDE-1 domain. Over residues T433 to E448 the composition is skewed to basic and acidic residues. Residues T433–K473 form a disordered region.

The protein belongs to the tigger transposable element derived protein family.

The protein localises to the nucleus. This is Tigger transposable element-derived protein 4 (Tigd4) from Mus musculus (Mouse).